The following is a 443-amino-acid chain: Ribosomal protein uS12 methylthiotransferase RimO (443 aa).

Positions 8–118 constitute an MTTase N-terminal domain; it reads PKVGFVSLGC…VVNAVHEVVP (111 aa). Positions 17, 53, 82, 151, 155, and 158 each coordinate [4Fe-4S] cluster. Residues 137–376 form the Radical SAM core domain; the sequence is LTPRHYAYLK…AHQQAISSAR (240 aa). A TRAM domain is found at 378–443; that stretch reads QLRIGKEIEV…DEYDMWAEPV (66 aa).

The protein belongs to the methylthiotransferase family. RimO subfamily. [4Fe-4S] cluster is required as a cofactor.

Its subcellular location is the cytoplasm. The catalysed reaction is L-aspartate(89)-[ribosomal protein uS12]-hydrogen + (sulfur carrier)-SH + AH2 + 2 S-adenosyl-L-methionine = 3-methylsulfanyl-L-aspartate(89)-[ribosomal protein uS12]-hydrogen + (sulfur carrier)-H + 5'-deoxyadenosine + L-methionine + A + S-adenosyl-L-homocysteine + 2 H(+). Its function is as follows. Catalyzes the methylthiolation of an aspartic acid residue of ribosomal protein uS12. The chain is Ribosomal protein uS12 methylthiotransferase RimO from Pseudomonas putida (strain W619).